The primary structure comprises 85 residues: Large ribosomal subunit protein bL27 (85 aa).

The tract at residues 1 to 20 is disordered; that stretch reads MAHKKAGGSTRNGRDSEAKR.

Belongs to the bacterial ribosomal protein bL27 family.

The protein is Large ribosomal subunit protein bL27 of Cronobacter sakazakii (strain ATCC BAA-894) (Enterobacter sakazakii).